The sequence spans 288 residues: Putative alkaline ceramidase dcd3A (288 aa).

N23 carries an N-linked (GlcNAc...) asparagine glycan. 7 helical membrane passes run 41–61 (IISL…GTGV), 78–98 (VILS…YHAT), 105–125 (LFDE…MVTV), 146–166 (HLLP…ILVI), 172–192 (ILQV…IYLI), 206–226 (SYLY…WVVE), and 240–260 (LHAF…QFLI).

It belongs to the alkaline ceramidase family.

It localises to the membrane. This chain is Putative alkaline ceramidase dcd3A (dcd3A), found in Dictyostelium discoideum (Social amoeba).